The chain runs to 296 residues: Protein FAM110A (296 aa).

2 disordered regions span residues 61–97 and 117–192; these read NTRQEPVQPPLVRQPLFSPGPRGPVLTPSRRVLPCSG and PVSP…KSDL. Composition is skewed to pro residues over residues 139–148 and 161–170; these read PATPPRPPPS and PASPARPYPS.

This sequence belongs to the FAM110 family. In terms of assembly, may interact with CSPP1.

It localises to the cytoplasm. The protein localises to the cytoskeleton. The protein resides in the microtubule organizing center. Its subcellular location is the centrosome. It is found in the spindle pole. In Mus musculus (Mouse), this protein is Protein FAM110A (Fam110a).